A 616-amino-acid polypeptide reads, in one-letter code: Chaperone protein HscA (616 aa).

Belongs to the heat shock protein 70 family.

Its function is as follows. Chaperone involved in the maturation of iron-sulfur cluster-containing proteins. Has a low intrinsic ATPase activity which is markedly stimulated by HscB. Involved in the maturation of IscU. In Salmonella typhimurium (strain LT2 / SGSC1412 / ATCC 700720), this protein is Chaperone protein HscA.